The sequence spans 576 residues: uncharacterized protein (576 aa).

Residues 241 to 261 (DNTKAPSPTNTAGSRELSTPA) show a composition bias toward polar residues. The segment at 241–270 (DNTKAPSPTNTAGSRELSTPAGSPGKASLP) is disordered.

This is an uncharacterized protein from Bacillus subtilis (strain 168).